Here is a 371-residue protein sequence, read N- to C-terminus: Partitioning defective 6 homolog beta (371 aa).

2 positions are modified to phosphoserine: Ser10 and Ser11. Positions 16 to 96 (TMEVKSKFGA…PLLRIFIQKK (81 aa)) constitute a PB1 domain. Residues 126-253 (RKKPHIVISM…ITVRPANQRN (128 aa)) form an interaction with PARD3 and CDC42 region. Residues 133–150 (ISMPQDFRPVSSIIDVDI) form the Pseudo-CRIB domain. In terms of domain architecture, PDZ spans 157 to 250 (RVRLYKYGTE…NLIITVRPAN (94 aa)). Disordered regions lie at residues 253 to 273 (NNVV…DNSL) and 326 to 371 (FESG…IITL). Residues 326–340 (FESGQNGFSPPQDTS) show a composition bias toward polar residues. Residues 352–363 (LESRAPDQKLLE) show a composition bias toward basic and acidic residues.

This sequence belongs to the PAR6 family. Interacts with PARD3. Interacts with GTP-bound forms of CDC42, RHOQ/TC10 and RAC1. Interacts with the N-terminal part of PRKCI and PRKCZ. Part of a complex with PARD3, CDC42 or RAC1 and PRKCI or PRKCZ. Part of a complex with LLGL1 and PRKCI. Interacts with ALS2CR19. Interacts with ECT2. Interacts with PALS1. As to expression, expressed in pancreas and in both adult and fetal kidney. Weakly expressed in placenta and lung. Not expressed in other tissues.

Its subcellular location is the cytoplasm. It is found in the cell membrane. The protein localises to the cell junction. The protein resides in the tight junction. Functionally, adapter protein involved in asymmetrical cell division and cell polarization processes. Probably involved in formation of epithelial tight junctions. Association with PARD3 may prevent the interaction of PARD3 with F11R/JAM1, thereby preventing tight junction assembly. The PARD6-PARD3 complex links GTP-bound Rho small GTPases to atypical protein kinase C proteins. The polypeptide is Partitioning defective 6 homolog beta (Pard6b) (Mus musculus (Mouse)).